Consider the following 320-residue polypeptide: o-succinylbenzoate synthase (320 aa).

The active-site Proton donor is Lys133. Mg(2+) is bound by residues Asp161, Glu190, and Asp213. Catalysis depends on Lys235, which acts as the Proton acceptor.

This sequence belongs to the mandelate racemase/muconate lactonizing enzyme family. MenC type 1 subfamily. A divalent metal cation serves as cofactor.

It catalyses the reaction (1R,6R)-6-hydroxy-2-succinyl-cyclohexa-2,4-diene-1-carboxylate = 2-succinylbenzoate + H2O. It functions in the pathway quinol/quinone metabolism; 1,4-dihydroxy-2-naphthoate biosynthesis; 1,4-dihydroxy-2-naphthoate from chorismate: step 4/7. The protein operates within quinol/quinone metabolism; menaquinone biosynthesis. Converts 2-succinyl-6-hydroxy-2,4-cyclohexadiene-1-carboxylate (SHCHC) to 2-succinylbenzoate (OSB). The polypeptide is o-succinylbenzoate synthase (Salmonella dublin (strain CT_02021853)).